The chain runs to 196 residues: DnaA initiator-associating protein DiaA (196 aa).

The SIS domain maps to 34-196 (LVHSLLNGNK…DNTLFPHQDD (163 aa)).

The protein belongs to the SIS family. DiaA subfamily. In terms of assembly, homotetramer; dimer of dimers.

Required for the timely initiation of chromosomal replication via direct interactions with the DnaA initiator protein. The sequence is that of DnaA initiator-associating protein DiaA from Citrobacter koseri (strain ATCC BAA-895 / CDC 4225-83 / SGSC4696).